We begin with the raw amino-acid sequence, 451 residues long: Trigger factor (451 aa).

The region spanning 165-250 is the PPIase FKBP-type domain; the sequence is DDKLTIDFEG…LHQIQAREAL (86 aa).

The protein belongs to the FKBP-type PPIase family. Tig subfamily.

It localises to the cytoplasm. The enzyme catalyses [protein]-peptidylproline (omega=180) = [protein]-peptidylproline (omega=0). Its function is as follows. Involved in protein export. Acts as a chaperone by maintaining the newly synthesized protein in an open conformation. Functions as a peptidyl-prolyl cis-trans isomerase. The polypeptide is Trigger factor (Helicobacter pylori (strain HPAG1)).